The primary structure comprises 79 residues: Neurotoxin 3FTx-LI (79 aa).

Residues methionine 1–threonine 21 form the signal peptide. Cystine bridges form between cysteine 24-cysteine 43, cysteine 36-cysteine 61, cysteine 65-cysteine 71, and cysteine 72-cysteine 77.

Expressed by the venom gland.

Its subcellular location is the secreted. Its function is as follows. Blocks both the muscle-twitch response to nerve stimulation and the response to exogenous acetylcholine. This is Neurotoxin 3FTx-LI from Bungarus fasciatus (Banded krait).